We begin with the raw amino-acid sequence, 304 residues long: Ribonuclease Z (304 aa).

7 residues coordinate Zn(2+): His61, His63, Asp65, His66, His138, Asp206, and His265. Catalysis depends on Asp65, which acts as the Proton acceptor.

This sequence belongs to the RNase Z family. As to quaternary structure, homodimer. The cofactor is Zn(2+).

The catalysed reaction is Endonucleolytic cleavage of RNA, removing extra 3' nucleotides from tRNA precursor, generating 3' termini of tRNAs. A 3'-hydroxy group is left at the tRNA terminus and a 5'-phosphoryl group is left at the trailer molecule.. Functionally, zinc phosphodiesterase, which displays some tRNA 3'-processing endonuclease activity. Probably involved in tRNA maturation, by removing a 3'-trailer from precursor tRNA. This chain is Ribonuclease Z, found in Lachnoclostridium phytofermentans (strain ATCC 700394 / DSM 18823 / ISDg) (Clostridium phytofermentans).